Reading from the N-terminus, the 156-residue chain is RNA pyrophosphohydrolase (156 aa).

The Nudix hydrolase domain occupies 6–148 (NYRPNVAAIV…KKNIYVKVIK (143 aa)). A Nudix box motif is present at residues 43–64 (GGIDKGESAKNALFRELKEEIG).

The protein belongs to the Nudix hydrolase family. RppH subfamily. A divalent metal cation is required as a cofactor.

Accelerates the degradation of transcripts by removing pyrophosphate from the 5'-end of triphosphorylated RNA, leading to a more labile monophosphorylated state that can stimulate subsequent ribonuclease cleavage. This is RNA pyrophosphohydrolase from Campylobacter jejuni subsp. doylei (strain ATCC BAA-1458 / RM4099 / 269.97).